Reading from the N-terminus, the 1553-residue chain is Sodium channel protein PaFPC1 (1553 aa).

The segment at 1–68 (MADNSPLIRE…SAHPDQALEQ (68 aa)) is disordered. Residues 1 to 140 (MADNSPLIRE…RVAISTMVQP (140 aa)) are Cytoplasmic-facing. Over residues 34 to 60 (ENGKTEENKDNSRDKGRGANKDRDGSA) the composition is skewed to basic and acidic residues. The chain crosses the membrane as a helical span at residues 141–159 (IFSYFIMITILIHCIFMIM). Over 160 to 165 (PATQTT) the chain is Extracellular. A helical membrane pass occupies residues 166–186 (YILELVFLSIYTIEVVVKVLA). Residues 187–200 (RGFILHPFAYLRDP) lie on the Cytoplasmic side of the membrane. A helical transmembrane segment spans residues 201–218 (WNWLDFLVTLIGYITLVV). The Extracellular portion of the chain corresponds to 219-224 (DLGHLY). Residues 225–241 (ALRAFRVLRSWRTVTIV) traverse the membrane as a helical segment. Residues 242–260 (PGWRTIVDALSLSITSLKD) are Cytoplasmic-facing. Residues 261–280 (LVLLLLFSLFVFAVLGLQIY) traverse the membrane as a helical segment. Over 281 to 360 (MGVLTQKCVK…PNYGYTSFDT (80 aa)) the chain is Extracellular. Disulfide bonds link cysteine 288–cysteine 337 and cysteine 328–cysteine 343. N-linked (GlcNAc...) asparagine glycosylation is found at asparagine 300, asparagine 308, asparagine 312, and asparagine 330. An intramembrane region (pore-forming) is located at residues 361-385 (FGWAFLSVFRLVTLDYWEDLYQLAL). Glutamate 378 is a saxitoxin binding site. Topologically, residues 386-392 (RSAGPWH) are extracellular. A helical membrane pass occupies residues 393–413 (ILFFIIVVFYGTFCFLNFILA). Residues 414–519 (VVVMSYTHMV…GAIGAVVLSP (106 aa)) lie on the Cytoplasmic side of the membrane. Residues 520 to 538 (FFELFIAVIIVLNITFMAL) form a helical membrane-spanning segment. Topologically, residues 539-549 (DHHDMNIEFER) are extracellular. The chain crosses the membrane as a helical span at residues 550–569 (ILRTGNYIFTSIYIVEAVLK). Topologically, residues 570–583 (IIALSPKFYFKDSW) are cytoplasmic. A helical transmembrane segment spans residues 584–603 (NVFDFIIVVFAILELGLEGV). At 604–605 (QG) the chain is on the extracellular side. The chain crosses the membrane as a helical span at residues 606-623 (LSVFRSFRLLRVFRLAKF). Residues 624-639 (WPTLNNFMSVMTKSYG) lie on the Cytoplasmic side of the membrane. A helical membrane pass occupies residues 640 to 658 (AFVNVMYVMFLLLFIFAII). The Extracellular segment spans residues 659–686 (GMQLFGMNYIDNMERFPDGDLPRWNFTD). N-linked (GlcNAc...) asparagine glycosylation is present at asparagine 683. The segment at residues 687–707 (FLHSFMIVFRALCGEWIESMW) is an intramembrane region (pore-forming). 2 residues coordinate tetrodotoxin: glutamate 701 and glutamate 704. Residue glutamate 704 coordinates saxitoxin. The Extracellular portion of the chain corresponds to 708 to 719 (DCMLVGDWSCIP). Cysteines 709 and 717 form a disulfide. The helical transmembrane segment at 720–740 (FFVAVFFVGNLVILNLLIALL) threads the bilayer. The Cytoplasmic segment spans residues 741-857 (LNNYGSFCTS…VCFLLAKNKY (117 aa)). Residues 858–875 (FQKFVTAVLVITSVLLAL) traverse the membrane as a helical segment. The Extracellular portion of the chain corresponds to 876 to 888 (EDIYLPQRPVLVN). Residues 889–907 (ITLYVDYVLTAFFVIEMII) form a helical membrane-spanning segment. The Cytoplasmic segment spans residues 908-921 (MLFAVGFKKYFTSK). The chain crosses the membrane as a helical span at residues 922-940 (WYWLDFIVVVAYLLNFVLM). Residues 941 to 945 (CAGIE) lie on the Extracellular side of the membrane. The chain crosses the membrane as a helical span at residues 946-964 (ALQTLRLLRVFRLFRPLSK). Over 965–981 (VNGMQVVTSTLVEAVPH) the chain is Cytoplasmic. A helical membrane pass occupies residues 982 to 1001 (IFNVILVGIFFWLVFAIMGV). At 1002-1047 (QLFAGKFYKCVDENSTVLSHEITMDRNDCLHENYTWENSPMNFDHV) the chain is on the extracellular side. Cysteines 1011 and 1030 form a disulfide. N-linked (GlcNAc...) asparagine glycosylation is present at asparagine 1015. An N-linked (GlcNAc...) asparagine; atypical glycan is attached at asparagine 1028. Residue asparagine 1034 is glycosylated (N-linked (GlcNAc...) asparagine). Residues 1048–1069 (GNAYLSLLQVATFKGWLQIMND) constitute an intramembrane region (pore-forming). Residue glycine 1062 participates in tetrodotoxin binding. Tryptophan 1063 is a saxitoxin binding site. Topologically, residues 1070–1086 (AIDSREVHKQPIRETNI) are extracellular. The helical transmembrane segment at 1087–1108 (YMYLYFIFFIVFGSFFILKLFV) threads the bilayer. Topologically, residues 1109–1171 (CILIDIFRQQ…LMYDISVNRK (63 aa)) are cytoplasmic. The linker region that may regulate channel inactivation stretch occupies residues 1133 to 1146 (QLIYRRAVMRTMSA). A helical membrane pass occupies residues 1172 to 1189 (FEYTMMILIILNVAVMAI). The Extracellular portion of the chain corresponds to 1190–1200 (DHYGQSMEFSE). The helical transmembrane segment at 1201-1219 (VLDYLNLIFIIIFFVECVI) threads the bilayer. Residues 1220–1231 (KVSGLRHHYFKD) lie on the Cytoplasmic side of the membrane. Residues 1232–1249 (PWNIIDFLYVVLAIAGLM) traverse the membrane as a helical segment. Residues 1250 to 1262 (LSDVIEKYFISPT) lie on the Extracellular side of the membrane. Residues 1263–1279 (LLRILRILRVGRLLRYF) form a helical membrane-spanning segment. Residues 1280–1298 (QSARGMRLLLLALRKALRT) lie on the Cytoplasmic side of the membrane. Residues 1299–1316 (LFNVSFLLFVIMFVYAVF) traverse the membrane as a helical segment. Residues 1317–1338 (GMEFFMHIRDAGAIDDVYNFKT) are Extracellular-facing. The pore-forming intramembrane region spans 1339 to 1361 (FGQSIILLFQLATSAGWDGVYFA). Residues glycine 1354 and aspartate 1356 each contribute to the tetrodotoxin site. Position 1356 (aspartate 1356) interacts with saxitoxin. Residues 1362–1387 (IANEEDCRAPDHELGYPGNCGSRALG) are Extracellular-facing. A disulfide bridge connects residues cysteine 1368 and cysteine 1381. A helical membrane pass occupies residues 1388-1410 (IAYLVSYLIITCLVVINMYAAVI). At 1411–1553 (LDYVLEVYED…NAWRKHKQQN (143 aa)) the chain is on the cytoplasmic side.

The protein belongs to the sodium channel (TC 1.A.1.10) family. As to expression, detected in adult nerve cord, muscle, gut and mushroom-shaped accessory glands.

The protein resides in the cell membrane. Its activity is regulated as follows. Inhibited by the pore blockers saxitoxin and tetrodotoxin. In terms of biological role, mediates the voltage-dependent sodium ion permeability of excitable membranes. This Periplaneta americana (American cockroach) protein is Sodium channel protein PaFPC1.